We begin with the raw amino-acid sequence, 75 residues long: Caerin-1.1 (75 aa).

Positions 1–22 are cleaved as a signal peptide; it reads MASLKKSLFLVLLLGFVSVSIC. Residues 23–49 constitute a propeptide that is removed on maturation; it reads EEEKRQEDEDEHEEEGESQEEGSEEKR. Residues 24-49 are disordered; that stretch reads EEKRQEDEDEHEEEGESQEEGSEEKR. A compositionally biased stretch (acidic residues) spans 30–45; it reads DEDEHEEEGESQEEGS. Leu-74 is modified (leucine amide).

Belongs to the frog skin active peptide (FSAP) family. Caerin subfamily. In terms of processing, the major product is Caerin-1.1; in addition, different peptides are produced that are missing some amino acid residues at the N-terminus or C-terminus. Caerin-1.1.1 and Caerin-1.1.4 are inactive. In terms of tissue distribution, expressed by the skin parotoid and/or rostral glands.

It localises to the secreted. Its function is as follows. Antimicrobial peptide with antibacterial and antiviral activities. Adopts an alpha helical conformation which can disrupt bacterial membranes. Inhibits the formation of NO by neuronal nitric oxide synthase (nNOS) at micromolar concentrations. Acts by a non-competitive mechanism, probably by binding to calcium/calmodulin and as a consequence blocking calmodulin attachment to nNOS. In terms of biological role, is inactive. The chain is Caerin-1.1 from Ranoidea caerulea (Green tree frog).